A 234-amino-acid polypeptide reads, in one-letter code: Probable plastid-lipid-associated protein 5, chloroplastic (234 aa).

The transit peptide at 1 to 45 (MALPWCLKTGVLTSPAAGFNHPSDSGFAVPTKLLSIRKGDRERLR) directs the protein to the chloroplast.

It belongs to the PAP/fibrillin family.

The protein resides in the plastid. The protein localises to the chloroplast thylakoid. The polypeptide is Probable plastid-lipid-associated protein 5, chloroplastic (PAP5) (Arabidopsis thaliana (Mouse-ear cress)).